We begin with the raw amino-acid sequence, 178 residues long: Oligoribonuclease (178 aa).

One can recognise an Exonuclease domain in the interval 7 to 168; that stretch reads LIWIDLEMTG…DDIRESIAEL (162 aa). Y128 is an active-site residue.

It belongs to the oligoribonuclease family.

It is found in the cytoplasm. 3'-to-5' exoribonuclease specific for small oligoribonucleotides. This Pseudomonas savastanoi pv. phaseolicola (strain 1448A / Race 6) (Pseudomonas syringae pv. phaseolicola (strain 1448A / Race 6)) protein is Oligoribonuclease.